The following is a 388-amino-acid chain: S-adenosylmethionine synthase 1 (388 aa).

Mg(2+) is bound at residue Glu-11. His-17 is a binding site for ATP. Position 45 (Glu-45) interacts with K(+). 2 residues coordinate L-methionine: Glu-58 and Gln-101. ATP-binding positions include 168 to 170 (DAK), 233 to 236 (SGRF), Asp-244, 250 to 251 (RK), Ala-267, Lys-271, and Lys-275. Asp-244 lines the L-methionine pocket. L-methionine is bound at residue Lys-275.

This sequence belongs to the AdoMet synthase family. Homotetramer. The cofactor is Mn(2+). Mg(2+) serves as cofactor. Co(2+) is required as a cofactor. It depends on K(+) as a cofactor. As to expression, mostly in Roots.

It is found in the cytoplasm. It catalyses the reaction L-methionine + ATP + H2O = S-adenosyl-L-methionine + phosphate + diphosphate. The protein operates within amino-acid biosynthesis; S-adenosyl-L-methionine biosynthesis; S-adenosyl-L-methionine from L-methionine: step 1/1. Its function is as follows. Catalyzes the formation of S-adenosylmethionine from methionine and ATP. The reaction comprises two steps that are both catalyzed by the same enzyme: formation of S-adenosylmethionine (AdoMet) and triphosphate, and subsequent hydrolysis of the triphosphate. This Pinus contorta (Shore pine) protein is S-adenosylmethionine synthase 1 (SAMS1).